Consider the following 204-residue polypeptide: SOSS complex subunit B homolog (204 aa).

The segment at residues 24 to 94 is a DNA-binding region (OB); the sequence is IVLEVGVATV…TLYSGKNGEV (71 aa). The interval 115-204 is disordered; it reads RAEQQAVANP…GRGGLKGERR (90 aa). Composition is skewed to low complexity over residues 122–131 and 139–183; these read ANPAATPAGL and GLPA…QTTT. The span at 187 to 198 shows a compositional bias: gly residues; that stretch reads TRGGRGGGGRGG.

This sequence belongs to the SOSS-B family.

The polypeptide is SOSS complex subunit B homolog (Drosophila melanogaster (Fruit fly)).